The chain runs to 372 residues: tRNA pseudouridine synthase D (372 aa).

D85 serves as the catalytic Nucleophile. The TRUD domain maps to 160-330 (GFANYFGYQR…MQGSRRFMWG (171 aa)).

Belongs to the pseudouridine synthase TruD family.

It catalyses the reaction uridine(13) in tRNA = pseudouridine(13) in tRNA. Functionally, responsible for synthesis of pseudouridine from uracil-13 in transfer RNAs. This Campylobacter jejuni subsp. jejuni serotype O:2 (strain ATCC 700819 / NCTC 11168) protein is tRNA pseudouridine synthase D.